Reading from the N-terminus, the 462-residue chain is tRNA modification GTPase MnmE (462 aa).

(6S)-5-formyl-5,6,7,8-tetrahydrofolate contacts are provided by arginine 26, glutamate 91, and arginine 130. A TrmE-type G domain is found at 228 to 382 (GLSTAKIGRP…IEERINDIFF (155 aa)). Asparagine 238 is a K(+) binding site. Residues 238–243 (NVGKSQ), 257–263 (TDIEGTT), and 282–285 (DTAG) contribute to the GTP site. Serine 242 provides a ligand contact to Mg(2+). K(+)-binding residues include threonine 257, isoleucine 259, and threonine 262. Threonine 263 lines the Mg(2+) pocket. Lysine 462 contributes to the (6S)-5-formyl-5,6,7,8-tetrahydrofolate binding site.

The protein belongs to the TRAFAC class TrmE-Era-EngA-EngB-Septin-like GTPase superfamily. TrmE GTPase family. As to quaternary structure, homodimer. Heterotetramer of two MnmE and two MnmG subunits. It depends on K(+) as a cofactor.

It is found in the cytoplasm. In terms of biological role, exhibits a very high intrinsic GTPase hydrolysis rate. Involved in the addition of a carboxymethylaminomethyl (cmnm) group at the wobble position (U34) of certain tRNAs, forming tRNA-cmnm(5)s(2)U34. The protein is tRNA modification GTPase MnmE of Streptococcus agalactiae.